A 389-amino-acid chain; its full sequence is tRNA (guanine-N(7)-)-methyltransferase non-catalytic subunit TRM82 (389 aa).

3 WD repeats span residues 44–86, 134–179, and 184–222; these read QNVP…HQLK, GHTS…KGFL, and QFVSQIHLFEICKESRLVSGGGEGKLFFWDWFREVLITE.

The protein belongs to the WD repeat TRM82 family. In terms of assembly, forms a heterodimer with the catalytic subunit TRM8.

It localises to the nucleus. It functions in the pathway tRNA modification; N(7)-methylguanine-tRNA biosynthesis. Functionally, required for the formation of N(7)-methylguanine at position 46 (m7G46) in tRNA. In the complex, it is required to stabilize and induce conformational changes of the catalytic subunit. The polypeptide is tRNA (guanine-N(7)-)-methyltransferase non-catalytic subunit TRM82 (Lodderomyces elongisporus (strain ATCC 11503 / CBS 2605 / JCM 1781 / NBRC 1676 / NRRL YB-4239) (Yeast)).